Reading from the N-terminus, the 183-residue chain is Gene BABR protein 2 (183 aa).

In Babesia bovis, this protein is Gene BABR protein 2.